Consider the following 92-residue polypeptide: Small ribosomal subunit protein uS19 (92 aa).

Residues Glu73 to Arg92 form a disordered region.

The protein belongs to the universal ribosomal protein uS19 family.

Its function is as follows. Protein S19 forms a complex with S13 that binds strongly to the 16S ribosomal RNA. The protein is Small ribosomal subunit protein uS19 of Maricaulis maris (strain MCS10) (Caulobacter maris).